Here is a 185-residue protein sequence, read N- to C-terminus: MASASLQTEISKFMSYVLRHAPHEVGLTLDPEGWVPFEDLKKAVFTRFDVTDADVLEVIETNPKKRFTLMGDRIRAAQGHSVDVDLALAPATPPSQLFHGTTMESWTAIQNAGLKKMQRHHVHLSADTETAKIVAARRKGVHIILEVEAARMHSEGHSFFVTDNEVWLTDHVPSQYLSPISGAES.

The protein belongs to the KptA/TPT1 family.

Removes the 2'-phosphate from RNA via an intermediate in which the phosphate is ADP-ribosylated by NAD followed by a presumed transesterification to release the RNA and generate ADP-ribose 1''-2''-cyclic phosphate (APPR&gt;P). May function as an ADP-ribosylase. This Rhizobium rhizogenes (strain K84 / ATCC BAA-868) (Agrobacterium radiobacter) protein is Probable RNA 2'-phosphotransferase.